Consider the following 261-residue polypeptide: UPF0328 protein ECU03_1620 (261 aa).

Belongs to the UPF0328 family.

This chain is UPF0328 protein ECU03_1620, found in Encephalitozoon cuniculi (strain GB-M1) (Microsporidian parasite).